Reading from the N-terminus, the 639-residue chain is Centromere protein T (639 aa).

Disordered regions lie at residues 1–64 (MDGR…RPNA), 266–294 (QLSD…GLVS), 307–451 (SEKD…ERGT), 458–477 (AAEE…ESEE), and 494–534 (QPVL…TREP). The segment covering 12–23 (RAAPTPRVAVRS) has biased composition (low complexity). A flexible stalk domain region spans residues 80-500 (IIQNQPQVSP…YRPQPVLSPP (421 aa)). Positions 267-281 (LSDSKTSAQRSNTSY) are enriched in polar residues. Composition is skewed to basic and acidic residues over residues 307–319 (SEKD…EHVD), 329–338 (QGEEEQDHSQ), 356–371 (TEHH…SEKK), and 432–449 (PGAK…EIER). Positions 458–469 (AAEEEATDDESD) are enriched in acidic residues.

This sequence belongs to the CENP-T/CNN1 family. As to quaternary structure, component of the CENPA-CAD complex, composed of CENPI, CENPK, CENPL, CENPO, CENPP, CENPQ, CENPR and CENPS. The CENPA-CAD complex is probably recruited on centromeres by the CENPA-NAC complex, at least composed of CENPA, CENPC, CENPH, CENPM, CENPN, CENPT and CENPU. Identified in a centromeric complex containing histones H2A, H2B, H3 and H4, and at least CENPA, CENPB, CENPC, CENPT, CENPN, HJURP, SUPT16H, SSRP1 and RSF1. Interacts (via N-terminus) with the NDC80 complex. Heterodimer with CENPW; this dimer coassembles with CENPS-CENPX heterodimers at centromeres to form the tetrameric CENP-T-W-S-X complex.

It is found in the nucleus. Its subcellular location is the chromosome. The protein localises to the centromere. It localises to the kinetochore. Component of the CENPA-NAC (nucleosome-associated) complex, a complex that plays a central role in assembly of kinetochore proteins, mitotic progression and chromosome segregation. The CENPA-NAC complex recruits the CENPA-CAD (nucleosome distal) complex and may be involved in incorporation of newly synthesized CENPA into centromeres. Part of a nucleosome-associated complex that binds specifically to histone H3-containing nucleosomes at the centromere, as opposed to nucleosomes containing CENPA. Component of the heterotetrameric CENP-T-W-S-X complex that binds and supercoils DNA, and plays an important role in kinetochore assembly. CENPT has a fundamental role in kinetochore assembly and function. It is one of the inner kinetochore proteins, with most further proteins binding downstream. Required for normal chromosome organization and normal progress through mitosis. The sequence is that of Centromere protein T (CENPT) from Gallus gallus (Chicken).